The sequence spans 397 residues: Lysophospholipid transporter LplT (397 aa).

Topologically, residues 1–17 (MSESVHTNTSLWSKGMK) are periplasmic. A helical membrane pass occupies residues 18–38 (AVIVAQFLSAFGDNALLFATL). The Cytoplasmic portion of the chain corresponds to 39–52 (ALLKAQFYPEWSQP). Residues 53–73 (ILQMVFVGAYILFAPFVGQVA) form a helical membrane-spanning segment. The Periplasmic segment spans residues 74 to 90 (DSFAKGRVMMFANGLKL). The helical transmembrane segment at 91-111 (LGAASICFGINPFLGYTLVGV) threads the bilayer. At 112–144 (GAAAYSPAKYGILGELTTGSKLVKANGLMEAST) the chain is on the cytoplasmic side. The chain crosses the membrane as a helical span at residues 145–165 (IAAILLGSVAGGVLADWHVLV). Residue A166 is a topological domain, periplasmic. The chain crosses the membrane as a helical span at residues 167–187 (LAACALAYGGAVVANIYIPKL). Residues 188–226 (AAARPGQSWNLINMTRSFLNACTSLWRNGETRFSLVGTS) are Cytoplasmic-facing. A helical membrane pass occupies residues 227–247 (LFWGAGVTLRFLLVLWVPVAL). At 248–256 (GITDNATPT) the chain is on the periplasmic side. The helical transmembrane segment at 257–277 (YLNAMVAIGIVVGAGAAAKLV) threads the bilayer. Residues 278–280 (TLE) lie on the Cytoplasmic side of the membrane. A helical membrane pass occupies residues 281-301 (TVSRCMPAGILIGVVVLIFSL). The Periplasmic portion of the chain corresponds to 302-304 (QHE). Residues 305–325 (QLPAYALLMLIGVLGGFFVVP) form a helical membrane-spanning segment. Over 326–343 (LNALLQERGKKSVGAGNA) the chain is Cytoplasmic. A helical membrane pass occupies residues 344-364 (IAVQNLGENSAMLLMLGIYSL). The Periplasmic portion of the chain corresponds to 365-366 (AV). Residues 367–387 (MVGIPVVPIGIGFGALFALAI) traverse the membrane as a helical segment. At 388 to 397 (TALWIWQRRH) the chain is on the cytoplasmic side.

It belongs to the major facilitator superfamily. LplT (TC 2.A.1.42) family.

Its subcellular location is the cell inner membrane. In terms of biological role, catalyzes the facilitated diffusion of 2-acyl-glycero-3-phosphoethanolamine (2-acyl-GPE) into the cell. The protein is Lysophospholipid transporter LplT of Escherichia coli O157:H7 (strain EC4115 / EHEC).